A 204-amino-acid chain; its full sequence is Fruiting body protein SC7 (204 aa).

The N-terminal stretch at 1 to 16 is a signal peptide; that stretch reads MKLTVILLTAVLAASA. The 124-residue stretch at 62-185 folds into the SCP domain; that stretch reads LKAHNNERAQ…KTLWYYVCNY (124 aa). N-linked (GlcNAc...) asparagine glycans are attached at residues asparagine 80, asparagine 118, and asparagine 134.

Belongs to the CRISP family.

It localises to the secreted. The sequence is that of Fruiting body protein SC7 (SC7) from Schizophyllum commune (Split gill fungus).